We begin with the raw amino-acid sequence, 152 residues long: Superoxide dismutase [Cu-Zn] (152 aa).

Positions 45, 47, and 62 each coordinate Cu cation. C56 and C145 form a disulfide bridge. H62, H70, H79, and D82 together coordinate Zn(2+). H119 lines the Cu cation pocket.

The protein belongs to the Cu-Zn superoxide dismutase family. Homodimer. It depends on Cu cation as a cofactor. Requires Zn(2+) as cofactor.

Its subcellular location is the cytoplasm. It catalyses the reaction 2 superoxide + 2 H(+) = H2O2 + O2. Its function is as follows. Destroys radicals which are normally produced within the cells and which are toxic to biological systems. The sequence is that of Superoxide dismutase [Cu-Zn] (SODCC) from Carica papaya (Papaya).